We begin with the raw amino-acid sequence, 598 residues long: Probable translation initiation factor IF-2 (598 aa).

In terms of domain architecture, tr-type G spans 3-225 (LRCPIVSVLG…GLAQKFLEQK (223 aa)). Residues 12 to 19 (GHVDHGKT) form a G1 region. Position 12 to 19 (12 to 19 (GHVDHGKT)) interacts with GTP. The G2 stretch occupies residues 37–41 (GITQH). The interval 76-79 (DTPG) is G3. Residues 76 to 80 (DTPGH) and 130 to 133 (NKVD) each bind GTP. Residues 130–133 (NKVD) are G4. The interval 200–202 (SAM) is G5.

The protein belongs to the TRAFAC class translation factor GTPase superfamily. Classic translation factor GTPase family. IF-2 subfamily.

Functionally, function in general translation initiation by promoting the binding of the formylmethionine-tRNA to ribosomes. Seems to function along with eIF-2. In Methanococcus maripaludis (strain C5 / ATCC BAA-1333), this protein is Probable translation initiation factor IF-2.